The chain runs to 190 residues: Glutamyl-tRNA(Gln) amidotransferase subunit F, mitochondrial (190 aa).

It belongs to the GatF family. Subunit of the heterotrimeric GatFAB amidotransferase (AdT) complex, composed of A, B and F subunits.

It is found in the mitochondrion inner membrane. It catalyses the reaction L-glutamyl-tRNA(Gln) + L-glutamine + ATP + H2O = L-glutaminyl-tRNA(Gln) + L-glutamate + ADP + phosphate + H(+). Allows the formation of correctly charged Gln-tRNA(Gln) through the transamidation of misacylated Glu-tRNA(Gln) in the mitochondria. The reaction takes place in the presence of glutamine and ATP through an activated gamma-phospho-Glu-tRNA(Gln). Required for proper protein synthesis within the mitochondrion. The polypeptide is Glutamyl-tRNA(Gln) amidotransferase subunit F, mitochondrial (Eremothecium gossypii (strain ATCC 10895 / CBS 109.51 / FGSC 9923 / NRRL Y-1056) (Yeast)).